Consider the following 247-residue polypeptide: Carboxy-S-adenosyl-L-methionine synthase (247 aa).

S-adenosyl-L-methionine is bound by residues tyrosine 40, 65–67 (GCS), 90–91 (DN), 122–123 (DI), asparagine 137, and arginine 204.

Belongs to the class I-like SAM-binding methyltransferase superfamily. Cx-SAM synthase family. Homodimer.

It carries out the reaction prephenate + S-adenosyl-L-methionine = carboxy-S-adenosyl-L-methionine + 3-phenylpyruvate + H2O. In terms of biological role, catalyzes the conversion of S-adenosyl-L-methionine (SAM) to carboxy-S-adenosyl-L-methionine (Cx-SAM). This chain is Carboxy-S-adenosyl-L-methionine synthase, found in Stutzerimonas stutzeri (strain A1501) (Pseudomonas stutzeri).